A 233-amino-acid chain; its full sequence is Membrane steroid-binding protein 2 (233 aa).

A helical transmembrane segment spans residues 23 to 43 (AFFTVLALAFAVYQVVSGFFV). Residues 70–167 (EITEEELKLY…SKYVKVGTIQ (98 aa)) form the Cytochrome b5 heme-binding domain. Positions 70–167 (EITEEELKLY…SKYVKVGTIQ (98 aa)) are steroid-binding. 2 stretches are compositionally biased toward basic and acidic residues: residues 169 to 181 (KDGE…EPSE) and 202 to 224 (THDE…KDVA). The tract at residues 169 to 233 (KDGEGKESSE…ATDDDDAAKE (65 aa)) is disordered. T225 is modified (phosphothreonine).

This sequence belongs to the cytochrome b5 family. MAPR subfamily.

It is found in the cell membrane. The sequence is that of Membrane steroid-binding protein 2 (MSBP2) from Arabidopsis thaliana (Mouse-ear cress).